Here is a 214-residue protein sequence, read N- to C-terminus: Fruiting body protein SC14 (214 aa).

An N-terminal signal peptide occupies residues 1 to 18 (MKLNIAILLAALAATASA). N-linked (GlcNAc...) asparagine glycosylation is found at N61 and N144. The SCP domain occupies 72–195 (LTAHNDERAQ…KSLWYYVCNY (124 aa)).

The protein belongs to the CRISP family.

The protein localises to the secreted. In Schizophyllum commune (Split gill fungus), this protein is Fruiting body protein SC14 (SC14).